The sequence spans 242 residues: 3-deoxy-manno-octulosonate cytidylyltransferase (242 aa).

This sequence belongs to the KdsB family.

The protein resides in the cytoplasm. It catalyses the reaction 3-deoxy-alpha-D-manno-oct-2-ulosonate + CTP = CMP-3-deoxy-beta-D-manno-octulosonate + diphosphate. It participates in nucleotide-sugar biosynthesis; CMP-3-deoxy-D-manno-octulosonate biosynthesis; CMP-3-deoxy-D-manno-octulosonate from 3-deoxy-D-manno-octulosonate and CTP: step 1/1. The protein operates within bacterial outer membrane biogenesis; lipopolysaccharide biosynthesis. In terms of biological role, activates KDO (a required 8-carbon sugar) for incorporation into bacterial lipopolysaccharide in Gram-negative bacteria. The polypeptide is 3-deoxy-manno-octulosonate cytidylyltransferase (Anaeromyxobacter dehalogenans (strain 2CP-1 / ATCC BAA-258)).